We begin with the raw amino-acid sequence, 274 residues long: Thymidylate synthase (274 aa).

R21 provides a ligand contact to dUMP. H51 is a binding site for (6R)-5,10-methylene-5,6,7,8-tetrahydrofolate. A dUMP-binding site is contributed by R123–R124. The active-site Nucleophile is C156. Residues R176–D179, N187, and H217–Y219 contribute to the dUMP site. D179 contacts (6R)-5,10-methylene-5,6,7,8-tetrahydrofolate. A (6R)-5,10-methylene-5,6,7,8-tetrahydrofolate-binding site is contributed by S273.

It belongs to the thymidylate synthase family. Bacterial-type ThyA subfamily. As to quaternary structure, homodimer.

It localises to the cytoplasm. The catalysed reaction is dUMP + (6R)-5,10-methylene-5,6,7,8-tetrahydrofolate = 7,8-dihydrofolate + dTMP. It functions in the pathway pyrimidine metabolism; dTTP biosynthesis. Catalyzes the reductive methylation of 2'-deoxyuridine-5'-monophosphate (dUMP) to 2'-deoxythymidine-5'-monophosphate (dTMP) while utilizing 5,10-methylenetetrahydrofolate (mTHF) as the methyl donor and reductant in the reaction, yielding dihydrofolate (DHF) as a by-product. This enzymatic reaction provides an intracellular de novo source of dTMP, an essential precursor for DNA biosynthesis. The chain is Thymidylate synthase from Francisella philomiragia subsp. philomiragia (strain ATCC 25017 / CCUG 19701 / FSC 153 / O#319-036).